Reading from the N-terminus, the 419-residue chain is MKKLFKKKKGVSPHMYMLPEESNSNTATNAPSYSVGGTTANSYSSNSYNDNNNSNSTYGSSNNYGNYGSSNNYGSYGASNTYGSNGSSNNYGNYGATNSNGDAGYSITPIRNDPYARKDMPPMKSSAAVTERPSMHRSAPSQDTLDLKKQELFAGARIQNDDESTTDTIPHNDDGTEGDEYGEGYRDGYEEDQEVEAIKQKIQFVKQDSLSSTRNALLMAGNAEQMGLATLANLGEQTEKIATAEKELDISKIHAKRAEEQARELKTLNRSMFAIHVPKPWGKAKRVAAEEARLAAKRDAERQDEMLNRQFAYRSQKRIDQAMKDNMKSNKKKGDSKGVSILERSHYQFEPDAEDDAMEKEIDGNLDQIGALATRLKGLAYATGQEIDSQNARLGSIHDKSDRLDTDVYLNVERLRHIH.

The span at 1–11 shows a compositional bias: basic residues; sequence MKKLFKKKKGV. 3 disordered regions span residues 1 to 60, 116 to 143, and 156 to 186; these read MKKL…TYGS, ARKD…PSQD, and ARIQ…EGYR. Positions 21 to 32 are enriched in polar residues; the sequence is ESNSNTATNAPS. The segment covering 36 to 60 has biased composition (low complexity); the sequence is GGTTANSYSSNSYNDNNNSNSTYGS. Position 141 is a phosphoserine (Ser-141). 2 t-SNARE coiled-coil homology domains span residues 203–265 and 356–418; these read QFVK…AREL and DAME…LRHI.

This sequence belongs to the SNAP-25 family.

Functionally, has a role in cell separation, a final step of cytokinesis and in the assembly of the forespore membrane. May have a role in the transport of secretory proteins to these growing sites. The chain is Protein transport protein sec9 (sec9) from Schizosaccharomyces pombe (strain 972 / ATCC 24843) (Fission yeast).